The following is a 296-amino-acid chain: 5,10-methylenetetrahydrofolate reductase (296 aa).

Residue Glu28 is the Proton donor/acceptor of the active site. Residue Thr59 coordinates NADH. FAD contacts are provided by Tyr60, Ala62, His88, Arg118, Gly119, Asp120, Ala132, Tyr152, His156, Ala159, Asp165, Asn168, Arg171, and Lys172. Asp120 contributes to the (6S)-5-methyl-5,6,7,8-tetrahydrofolate binding site. Gln183 contributes to the NADH binding site. Residues Gln183, Gln219, and Arg279 each contribute to the (6S)-5-methyl-5,6,7,8-tetrahydrofolate site.

It belongs to the methylenetetrahydrofolate reductase family. The cofactor is FAD.

It carries out the reaction (6S)-5-methyl-5,6,7,8-tetrahydrofolate + NAD(+) = (6R)-5,10-methylene-5,6,7,8-tetrahydrofolate + NADH + H(+). The protein operates within one-carbon metabolism; tetrahydrofolate interconversion. Its pathway is amino-acid biosynthesis; L-methionine biosynthesis via de novo pathway. In terms of biological role, catalyzes the NADH-dependent reduction of 5,10-methylenetetrahydrofolate to 5-methyltetrahydrofolate. Is required to provide the methyl group necessary for methionine synthetase to convert homocysteine to methionine; the methyl group is given by 5-methyltetrahydrofolate. The sequence is that of 5,10-methylenetetrahydrofolate reductase (metF) from Salmonella typhimurium (strain LT2 / SGSC1412 / ATCC 700720).